The primary structure comprises 441 residues: MAKDGFDLVIGLGVTGRSVIRYLTDQGMPVRAIDTRAEPVGLDALCADFPDLKVHTGGFKKGWMGKARRLIVSPGVAVSTPAIAEQVVDGKEVIGDIELFARAASEPLVAITGSNAKSTVTTLLGQVADACGMNPGIGGNLGVPALELLDDQARLYVLELSSFQLETTYSLSAEVATVLNVSQDHLDRYASFADYLAAKQRVYDGCQVAVWNRDDLATRPPATVARQISFGAHPEADYRLDSENGQLLCRGEPLLSLSELALTGHHNAMNILSVLAISDALSLNRDKALATVKTFTGLPHRCQLVAESGGVRWFNDSKATNVGATLAALTGIGESIEGKVILVAGGLGKGQDFSPLAEPARQYLRAALLMGEDRTTVAQGMSAAPCELVADMAVAVRRAHALAQPGDAVLLSPACASFDQYSGFAARGDDFTTRAQELCHD.

113-119 serves as a coordination point for ATP; the sequence is GSNAKST.

This sequence belongs to the MurCDEF family.

The protein resides in the cytoplasm. It catalyses the reaction UDP-N-acetyl-alpha-D-muramoyl-L-alanine + D-glutamate + ATP = UDP-N-acetyl-alpha-D-muramoyl-L-alanyl-D-glutamate + ADP + phosphate + H(+). The protein operates within cell wall biogenesis; peptidoglycan biosynthesis. Functionally, cell wall formation. Catalyzes the addition of glutamate to the nucleotide precursor UDP-N-acetylmuramoyl-L-alanine (UMA). This chain is UDP-N-acetylmuramoylalanine--D-glutamate ligase, found in Alcanivorax borkumensis (strain ATCC 700651 / DSM 11573 / NCIMB 13689 / SK2).